The chain runs to 341 residues: Methionine import ATP-binding protein MetN 3 (341 aa).

One can recognise an ABC transporter domain in the interval 2 to 241 (ILLENVKKIY…PQQDITKRFV (240 aa)). ATP is bound at residue 38–45 (GYSGAGKS).

The protein belongs to the ABC transporter superfamily. Methionine importer (TC 3.A.1.24) family. As to quaternary structure, the complex is composed of two ATP-binding proteins (MetN), two transmembrane proteins (MetI) and a solute-binding protein (MetQ).

It is found in the cell membrane. It carries out the reaction L-methionine(out) + ATP + H2O = L-methionine(in) + ADP + phosphate + H(+). The enzyme catalyses D-methionine(out) + ATP + H2O = D-methionine(in) + ADP + phosphate + H(+). Part of the ABC transporter complex MetNIQ involved in methionine import. Responsible for energy coupling to the transport system. The chain is Methionine import ATP-binding protein MetN 3 from Bacillus cereus (strain ZK / E33L).